The sequence spans 357 residues: Phenylalanine--tRNA ligase alpha subunit (357 aa).

A Mg(2+)-binding site is contributed by Glu-258.

The protein belongs to the class-II aminoacyl-tRNA synthetase family. Phe-tRNA synthetase alpha subunit type 1 subfamily. In terms of assembly, tetramer of two alpha and two beta subunits. Mg(2+) is required as a cofactor.

Its subcellular location is the cytoplasm. The catalysed reaction is tRNA(Phe) + L-phenylalanine + ATP = L-phenylalanyl-tRNA(Phe) + AMP + diphosphate + H(+). This is Phenylalanine--tRNA ligase alpha subunit from Caulobacter vibrioides (strain ATCC 19089 / CIP 103742 / CB 15) (Caulobacter crescentus).